The sequence spans 264 residues: Tritrans,polycis-undecaprenyl-diphosphate synthase (geranylgeranyl-diphosphate specific) (264 aa).

Asp-43 is a catalytic residue. Asp-43 serves as a coordination point for Mg(2+). Substrate contacts are provided by residues 44 to 47, Trp-48, His-60, and 88 to 90; these read GNRR and STE. The Proton acceptor role is filled by Asn-91. Substrate contacts are provided by residues Phe-92, Arg-94, Arg-213, and 219–221; that span reads RIS. Position 232 (Glu-232) interacts with Mg(2+).

It belongs to the UPP synthase family. Homodimer. Mg(2+) serves as cofactor.

It catalyses the reaction geranylgeranyl diphosphate + 7 isopentenyl diphosphate = tri-trans,hepta-cis-undecaprenyl diphosphate + 7 diphosphate. Functionally, catalyzes the sequential condensation of isopentenyl diphosphate (IPP) with geranylgeranyl diphosphate (GGPP) to yield (2Z,6Z,10Z,14Z,18Z,22Z,26Z,30E,34E,38E)-undecaprenyl diphosphate (tritrans,heptacis-UPP). It is probably the precursor of glycosyl carrier lipids. This Pyrococcus horikoshii (strain ATCC 700860 / DSM 12428 / JCM 9974 / NBRC 100139 / OT-3) protein is Tritrans,polycis-undecaprenyl-diphosphate synthase (geranylgeranyl-diphosphate specific).